Here is a 280-residue protein sequence, read N- to C-terminus: Nocamycin O-methyltransferase (280 aa).

Belongs to the methyltransferase superfamily.

It carries out the reaction nocamycin E + S-adenosyl-L-methionine = nocamycin I + S-adenosyl-L-homocysteine. It functions in the pathway antibiotic biosynthesis. Functionally, involved in the biosynthesis of nocamycin I and nocamycin II. Catalyzes the methylation of nocamycin E to yield nocamycin I. In Saccharothrix syringae (Nocardiopsis syringae), this protein is Nocamycin O-methyltransferase.